Consider the following 78-residue polypeptide: Calcium/calmodulin-dependent protein kinase II inhibitor 1 (78 aa).

Residues 41-68 form a CAMK2 inhibitory domain region; it reads SKRPPKLGQIGRSKRVVIEDDRIDDVLK.

It belongs to the CAMK2N family. Interacts with CAMK2B; the presence of Ca(2+)/calmodulin increases the interaction but is not essential. Interacts with CAMK2A; this interaction requires CAMK2A activation by Ca(2+). As to expression, expressed in the brain (at protein level). Expressed in cardiomyocytes but not cardiac fibroblasts (at protein level).

It is found in the synapse. Its subcellular location is the cell projection. The protein resides in the dendrite. The protein localises to the postsynaptic density. Functionally, potent and specific inhibitor of CaM-kinase II (CAMK2). Plays a role in the maintenance of long-term retrieval-induced memory in response to contextual fear. Modulates blood pressure and vascular reactivity via regulation of CAMK2 activity in addition to regulation of left ventricular mass. Mediates the NLRP3 inflammasome in cardiomyocytes via acting as an inhibitor of the MAPK14/p38 and MAPK8/JNK pathways, thereby regulating ventricular remodeling and cardiac rhythm post-myocardial infarction. Negatively effects insulin sensitivity and promotes lipid formation in adipose tissues independent of CAMK2 signaling. In Mus musculus (Mouse), this protein is Calcium/calmodulin-dependent protein kinase II inhibitor 1 (Camk2n1).